The following is a 593-amino-acid chain: Alanine--tRNA ligase (593 aa).

H456, H460, C558, and H562 together coordinate Zn(2+).

The protein belongs to the class-II aminoacyl-tRNA synthetase family. Zn(2+) is required as a cofactor.

It is found in the cytoplasm. The enzyme catalyses tRNA(Ala) + L-alanine + ATP = L-alanyl-tRNA(Ala) + AMP + diphosphate. Its function is as follows. Catalyzes the attachment of alanine to tRNA(Ala) in a two-step reaction: alanine is first activated by ATP to form Ala-AMP and then transferred to the acceptor end of tRNA(Ala). Also edits incorrectly charged Ser-tRNA(Ala) and Gly-tRNA(Ala) via its editing domain. The sequence is that of Alanine--tRNA ligase (alaS) from Borrelia hermsii (strain HS1 / DAH).